A 279-amino-acid polypeptide reads, in one-letter code: Complement component 1 Q subcomponent-binding protein, mitochondrial (279 aa).

The N-terminal 71 residues, 1 to 71 (MLPLLRCVPR…PVPCACGCGA (71 aa)), are a transit peptide targeting the mitochondrion. Positions 74 to 91 (TEGDKAFVEFLTDEIKEE) are C1q binding. An N6-acetyllysine mark is found at K89 and K92. A disordered region spans residues 134–162 (NNSIPPTFDGEEEPSQGQKAEEQEPELTS). Positions 166 to 210 (FVVEVTKTDGKKTLVLDCHYPEDEIGHEDEAESDIFSIKEVSFQT) are interaction with MAVS. A Phosphotyrosine modification is found at Y185. A phosphoserine mark is found at S198 and S202. Phosphothreonine is present on T211.

It belongs to the MAM33 family. As to quaternary structure, homotrimer; three monomers form a donut-shaped structure with an unusually asymmetric charge distribution on the surface. Interacts with CDK13, HRK, VTN, NFYB, ADRA1B, FOXC1, DDX21, DDX50, NCL, SRSF1 and SRSF9. Interacts with CD93; the association may represent a cell surface C1q receptor. Interacts with KRT1; the association represents a cell surface kininogen receptor. Interacts with CD209; the interaction is indicative for a C1q:C1QBP:CD209 signaling complex. Interacts with FBL and RRP1; the respective interactions with C1QBP are competitive. Probably associates with the mitoribosome. Interacts with MAVS; the interaction occurs upon viral transfection. Interacts with PPIF. Interacts with U2AF1L4. Interacts with PLEKHN1. Interacts with VGF-derived peptide TLQP-21. Interacts with MRE11 and RAD50; forming the MRC (MRE11-RAD50-C1QBP) complex that inhibits the activity of MRE11. In terms of tissue distribution, ubiquitous.

The protein localises to the mitochondrion matrix. The protein resides in the nucleus. It is found in the cell membrane. Its subcellular location is the secreted. It localises to the cytoplasm. The protein localises to the nucleolus. In terms of biological role, multifunctional and multicompartmental protein involved in inflammation and infection processes, ribosome biogenesis, protein synthesis in mitochondria, regulation of apoptosis, transcriptional regulation and pre-mRNA splicing. At the cell surface is thought to act as an endothelial receptor for plasma proteins of the complement and kallikrein-kinin cascades. Putative receptor for C1q; specifically binds to the globular 'heads' of C1q thus inhibiting C1; may perform the receptor function through a complex with C1qR/CD93. In complex with cytokeratin-1/KRT1 is a high affinity receptor for kininogen-1/HMWK. Can also bind other plasma proteins, such as coagulation factor XII leading to its autoactivation. May function to bind initially fluid kininogen-1 to the cell membrane. The secreted form may enhance both extrinsic and intrinsic coagulation pathways. It is postulated that the cell surface form requires docking with transmembrane proteins for downstream signaling which might be specific for a cell-type or response. By acting as C1q receptor is involved in chemotaxis of immature dendritic cells and neutrophils and is proposed to signal through CD209/DC-SIGN on immature dendritic cells, through integrin alpha-4/beta-1 during trophoblast invasion of the decidua, and through integrin beta-1 during endothelial cell adhesion and spreading. Signaling involved in inhibition of innate immune response is implicating the PI3K-AKT/PKB pathway. Required for protein synthesis in mitochondria. In mitochondrial translation may be involved in formation of functional 55S mitoribosomes; the function seems to involve its RNA-binding activity. Acts as a RNA modification reader, which specifically recognizes and binds mitochondrial RNAs modified by C5-methylcytosine (m5C) in response to stress, and promotes recruitment of the mitochondrial degradosome complex, leading to their degradation. May be involved in the nucleolar ribosome maturation process; the function may involve the exchange of FBL for RRP1 in the association with pre-ribosome particles. Involved in regulation of RNA splicing by inhibiting the RNA-binding capacity of SRSF1 and its phosphorylation. Is required for the nuclear translocation of splicing factor U2AF1L4. Involved in regulation of CDKN2A- and HRK-mediated apoptosis. Stabilizes mitochondrial CDKN2A isoform smARF. May be involved in regulation of FOXC1 transcriptional activity and NFY/CCAAT-binding factor complex-mediated transcription. May play a role in antibacterial defense as it can bind to cell surface hyaluronan and inhibit Streptococcus pneumoniae hyaluronate lyase. May be involved in modulation of the immune response; ligation by HCV core protein is resulting in suppression of interleukin-12 production in monocyte-derived dendritic cells. Involved in regulation of antiviral response by inhibiting RIGI- and IFIH1-mediated signaling pathways probably involving its association with MAVS after viral infection. Acts as a regulator of DNA repair via homologous recombination by inhibiting the activity of MRE11: interacts with unphosphorylated MRE11 and RAD50 in absence of DNA damage, preventing formation and activity of the MRN complex. Following DNA damage, dissociates from phosphorylated MRE11, allowing formation of the MRN complex. The polypeptide is Complement component 1 Q subcomponent-binding protein, mitochondrial (C1qbp) (Rattus norvegicus (Rat)).